The sequence spans 621 residues: Glutamyl-tRNA(Gln) amidotransferase subunit E (621 aa).

It belongs to the GatB/GatE family. GatE subfamily. In terms of assembly, heterodimer of GatD and GatE.

The catalysed reaction is L-glutamyl-tRNA(Gln) + L-glutamine + ATP + H2O = L-glutaminyl-tRNA(Gln) + L-glutamate + ADP + phosphate + H(+). Its function is as follows. Allows the formation of correctly charged Gln-tRNA(Gln) through the transamidation of misacylated Glu-tRNA(Gln) in organisms which lack glutaminyl-tRNA synthetase. The reaction takes place in the presence of glutamine and ATP through an activated gamma-phospho-Glu-tRNA(Gln). The GatDE system is specific for glutamate and does not act on aspartate. In Methanobrevibacter smithii (strain ATCC 35061 / DSM 861 / OCM 144 / PS), this protein is Glutamyl-tRNA(Gln) amidotransferase subunit E.